A 448-amino-acid polypeptide reads, in one-letter code: Probable glycine dehydrogenase (decarboxylating) subunit 1 (448 aa).

The protein belongs to the GcvP family. N-terminal subunit subfamily. In terms of assembly, the glycine cleavage system is composed of four proteins: P, T, L and H. In this organism, the P 'protein' is a heterodimer of two subunits.

The enzyme catalyses N(6)-[(R)-lipoyl]-L-lysyl-[glycine-cleavage complex H protein] + glycine + H(+) = N(6)-[(R)-S(8)-aminomethyldihydrolipoyl]-L-lysyl-[glycine-cleavage complex H protein] + CO2. Functionally, the glycine cleavage system catalyzes the degradation of glycine. The P protein binds the alpha-amino group of glycine through its pyridoxal phosphate cofactor; CO(2) is released and the remaining methylamine moiety is then transferred to the lipoamide cofactor of the H protein. In Anoxybacillus flavithermus (strain DSM 21510 / WK1), this protein is Probable glycine dehydrogenase (decarboxylating) subunit 1.